The chain runs to 404 residues: Cysteine desulfurase IscS (404 aa).

Pyridoxal 5'-phosphate is bound by residues 75–76 (AT), asparagine 155, glutamine 183, and 203–205 (SGH). Lysine 206 carries the N6-(pyridoxal phosphate)lysine modification. Position 243 (threonine 243) interacts with pyridoxal 5'-phosphate. The active-site Cysteine persulfide intermediate is cysteine 328. Position 328 (cysteine 328) interacts with [2Fe-2S] cluster.

The protein belongs to the class-V pyridoxal-phosphate-dependent aminotransferase family. NifS/IscS subfamily. In terms of assembly, homodimer. Forms a heterotetramer with IscU, interacts with other sulfur acceptors. It depends on pyridoxal 5'-phosphate as a cofactor.

It localises to the cytoplasm. The catalysed reaction is (sulfur carrier)-H + L-cysteine = (sulfur carrier)-SH + L-alanine. It functions in the pathway cofactor biosynthesis; iron-sulfur cluster biosynthesis. Functionally, master enzyme that delivers sulfur to a number of partners involved in Fe-S cluster assembly, tRNA modification or cofactor biosynthesis. Catalyzes the removal of elemental sulfur atoms from cysteine to produce alanine. Functions as a sulfur delivery protein for Fe-S cluster synthesis onto IscU, an Fe-S scaffold assembly protein, as well as other S acceptor proteins. The polypeptide is Cysteine desulfurase IscS (Shewanella baltica (strain OS185)).